A 145-amino-acid chain; its full sequence is MNIETKYHGTVQLSQLALVSFENGLPGFEHEKQFALLPIHDSPFTILQSIQHKDVAFVMIEPFSYFPTYEIELDDATCEQLKIQKENDVALYVILTVAEPFTNTTANLQAPVVINVHERIGKQVILTNTPYKTKHRLFPETVEAK.

The protein belongs to the FliW family. In terms of assembly, interacts with translational regulator CsrA and flagellin(s).

Its subcellular location is the cytoplasm. In terms of biological role, acts as an anti-CsrA protein, binds CsrA and prevents it from repressing translation of its target genes, one of which is flagellin. Binds to flagellin and participates in the assembly of the flagellum. The sequence is that of Flagellar assembly factor FliW from Anoxybacillus flavithermus (strain DSM 21510 / WK1).